The following is a 112-amino-acid chain: Putative inner membrane protein YafU (112 aa).

Residues 1-21 (MSSERDLVNFLGDFSMDVAKA) lie on the Cytoplasmic side of the membrane. The helical transmembrane segment at 22–42 (VIAGGVATAIGSLASFACVSF) threads the bilayer. Position 43 (G43) is a topological domain, periplasmic. A helical membrane pass occupies residues 44–64 (FPVILVGGAILLTGIVCTVVL). The Cytoplasmic segment spans residues 65 to 112 (NEIDAQCHLSEKLKYAIRDGLKRQQELDKWKRENMTPFMYVLNTPPVI).

It is found in the cell inner membrane. The chain is Putative inner membrane protein YafU (yafU) from Escherichia coli (strain K12).